We begin with the raw amino-acid sequence, 815 residues long: MTALEHFVAIDRDLLHAAARRACERIAPTWPLDRMIAVSPLWERRDQAWQEVAEQLWRRAGSRLTLDAQAYRQALQEGHLDDRHLQQALDEAGSSWTPAQLLHLLPAQDAEACGLPLLEDMADAEIALPGWPTLITQQIGQCCAAWFDEAQADWRPDRSEGLYQAWRAAMLQDRGLSVLSACAELRQRIGELPMQPQAALEVAVQRLGLAADELDEWFDCLLLRSLGWASWCAYRRWQARLQGDDDDSLRQLLAIRAAWEWLVDDRLRHAGSRWSNWREAWQAARSRVPAAGWQALMLCQRAEELAWQEQLQQGLRRPQAVPAQAPELARVYFCIDVRSEPLRRALEQACPQVRTGGFAGFFGLPIAYTPLGTAATRPQLPGLLAAQLAVSDSSGDSQRDRVLAERRQKRLARKERWQLFERLPASSFTLIESTGLGYAGALLGRTCGLLQGAGAAHRAAWRAAEWRALKPALAPLALTERVQLAARVLRAMSLTRDFPPLILLLGHGSQSANNPQAAGLDCGACCGQSGEVNARLLADLLNDAGVRQGLAEEGIELPDACRVLAGLHNTSTDEVQVFIDALLSAELHSAWQQLRAALDAAGAEVRRQRAARLGLQPVAERPQRLLAALRRRVGDWAQTRPEWGLAGNAGFIAAPRERTRGVDLQGRVFLHDYDWRQDEDGKVLELIMTAPMVVAHWINLQYLTSTTDNRRFGSGNKVLHNVVGGHIGVFEGNGGDLRIGLARQSLHDGERWVHRPLRLSVVLAAPQAMIERVIAAHQVVRDLVEHGWLHLLRLDDDASMPLERRGEAGWQKLAG.

Cys334, Asp336, His507, and Cys522 together coordinate Zn(2+).

The protein belongs to the inorganic carbon transporter (TC 9.A.2) DabA family. As to quaternary structure, forms a complex with DabB. The cofactor is Zn(2+).

The protein localises to the cell inner membrane. Functionally, part of an energy-coupled inorganic carbon pump. The chain is Probable inorganic carbon transporter subunit DabA from Ectopseudomonas mendocina (strain ymp) (Pseudomonas mendocina).